A 429-amino-acid chain; its full sequence is 3-phosphoshikimate 1-carboxyvinyltransferase (429 aa).

3-phosphoshikimate-binding residues include Lys-22, Ser-23, and Arg-27. Lys-22 contacts phosphoenolpyruvate. Phosphoenolpyruvate contacts are provided by Gly-94 and Arg-122. Positions 167, 169, 315, and 342 each coordinate 3-phosphoshikimate. Gln-169 is a binding site for phosphoenolpyruvate. The active-site Proton acceptor is Asp-315. Residues Arg-346 and Arg-388 each contribute to the phosphoenolpyruvate site.

The protein belongs to the EPSP synthase family. As to quaternary structure, monomer.

The protein localises to the cytoplasm. The catalysed reaction is 3-phosphoshikimate + phosphoenolpyruvate = 5-O-(1-carboxyvinyl)-3-phosphoshikimate + phosphate. The protein operates within metabolic intermediate biosynthesis; chorismate biosynthesis; chorismate from D-erythrose 4-phosphate and phosphoenolpyruvate: step 6/7. In terms of biological role, catalyzes the transfer of the enolpyruvyl moiety of phosphoenolpyruvate (PEP) to the 5-hydroxyl of shikimate-3-phosphate (S3P) to produce enolpyruvyl shikimate-3-phosphate and inorganic phosphate. The polypeptide is 3-phosphoshikimate 1-carboxyvinyltransferase (Geobacter sulfurreducens (strain ATCC 51573 / DSM 12127 / PCA)).